The primary structure comprises 173 residues: Crossover junction endodeoxyribonuclease RuvC (173 aa).

Catalysis depends on residues aspartate 8, glutamate 67, and aspartate 139. Mg(2+) is bound by residues aspartate 8, glutamate 67, and aspartate 139.

This sequence belongs to the RuvC family. Homodimer which binds Holliday junction (HJ) DNA. The HJ becomes 2-fold symmetrical on binding to RuvC with unstacked arms; it has a different conformation from HJ DNA in complex with RuvA. In the full resolvosome a probable DNA-RuvA(4)-RuvB(12)-RuvC(2) complex forms which resolves the HJ. Mg(2+) is required as a cofactor.

Its subcellular location is the cytoplasm. The enzyme catalyses Endonucleolytic cleavage at a junction such as a reciprocal single-stranded crossover between two homologous DNA duplexes (Holliday junction).. Its function is as follows. The RuvA-RuvB-RuvC complex processes Holliday junction (HJ) DNA during genetic recombination and DNA repair. Endonuclease that resolves HJ intermediates. Cleaves cruciform DNA by making single-stranded nicks across the HJ at symmetrical positions within the homologous arms, yielding a 5'-phosphate and a 3'-hydroxyl group; requires a central core of homology in the junction. The consensus cleavage sequence is 5'-(A/T)TT(C/G)-3'. Cleavage occurs on the 3'-side of the TT dinucleotide at the point of strand exchange. HJ branch migration catalyzed by RuvA-RuvB allows RuvC to scan DNA until it finds its consensus sequence, where it cleaves and resolves the cruciform DNA. The chain is Crossover junction endodeoxyribonuclease RuvC from Serratia proteamaculans (strain 568).